A 430-amino-acid polypeptide reads, in one-letter code: MALAMMIRNAASKRGMTPISGHFGGLRSMSSWWKSVEPAPKDPILGVTEAFLADPSPEKVNVGVGAYRDDNGKPVVLECVREAEKRLAGSTFMEYLPMGGSAKMVDLTLKLAYGDNSEFIKDKRIAAVQTLSGTGACRLFADFQKRFSPGSQIYIPVPTWSNHHNIWKDAQVPQKTYHYYHPETKGLDFSALMDDVKNAPEGSFFLLHACAHNPTGVDPTEEQWREISQLFKAKKHFAFFDMAYQGFASGDPARDAKSIRIFLEDGHHIGISQSYAKNMGLYGQRVGCLSVLCEDPKQAVAVKSQLQQLARPMYSNPPLHGAQLVSTILEDPELKSLWLKEVKVMADRIIGMRTTLRESLEKLGSPLSWEHVTKQIGMFCYSGLTPEQVDRLTSEYHIYMTRNGRISMAGVTTGNVGYLANAIHEVTKSS.

Residues M1–S28 constitute a mitochondrion transit peptide. G65, W160, and N213 together coordinate L-aspartate. Residue K277 is modified to N6-(pyridoxal phosphate)lysine. An L-aspartate-binding site is contributed by R405.

The protein belongs to the class-I pyridoxal-phosphate-dependent aminotransferase family. In terms of assembly, homodimer. Pyridoxal 5'-phosphate is required as a cofactor.

The protein resides in the mitochondrion matrix. The catalysed reaction is L-aspartate + 2-oxoglutarate = oxaloacetate + L-glutamate. Functionally, amino acid aminotransferase important for the metabolism of amino acids and Krebs-cycle related organic acids. No activity with D-Asp or D-Ala as amino donors. In plants, it is involved in nitrogen metabolism and in aspects of carbon and energy metabolism. This Arabidopsis thaliana (Mouse-ear cress) protein is Aspartate aminotransferase, mitochondrial (ASP1).